A 622-amino-acid chain; its full sequence is Chaperone protein HscA homolog (622 aa).

Belongs to the heat shock protein 70 family.

Functionally, chaperone involved in the maturation of iron-sulfur cluster-containing proteins. Has a low intrinsic ATPase activity which is markedly stimulated by HscB. The polypeptide is Chaperone protein HscA homolog (Acidovorax ebreus (strain TPSY) (Diaphorobacter sp. (strain TPSY))).